The sequence spans 659 residues: UvrABC system protein B (659 aa).

The Helicase ATP-binding domain occupies 25–414; it reads EGVRRGAREQ…PSLVVEQIVR (390 aa). Position 38-45 (38-45) interacts with ATP; that stretch reads GATGTGKT. Residues 91-114 carry the Beta-hairpin motif; that stretch reads YYDYYQPEAYIPTTDTYIEKDALI. Residues 431-597 enclose the Helicase C-terminal domain; sequence QIDDLYAEIR…TIVKPVRDVI (167 aa). The 36-residue stretch at 620 to 655 folds into the UVR domain; the sequence is PKVVAKLRKEMMQAAKDLDFERAAEIRDIIFELEKK.

It belongs to the UvrB family. Forms a heterotetramer with UvrA during the search for lesions. Interacts with UvrC in an incision complex.

It localises to the cytoplasm. In terms of biological role, the UvrABC repair system catalyzes the recognition and processing of DNA lesions. A damage recognition complex composed of 2 UvrA and 2 UvrB subunits scans DNA for abnormalities. Upon binding of the UvrA(2)B(2) complex to a putative damaged site, the DNA wraps around one UvrB monomer. DNA wrap is dependent on ATP binding by UvrB and probably causes local melting of the DNA helix, facilitating insertion of UvrB beta-hairpin between the DNA strands. Then UvrB probes one DNA strand for the presence of a lesion. If a lesion is found the UvrA subunits dissociate and the UvrB-DNA preincision complex is formed. This complex is subsequently bound by UvrC and the second UvrB is released. If no lesion is found, the DNA wraps around the other UvrB subunit that will check the other stand for damage. In Symbiobacterium thermophilum (strain DSM 24528 / JCM 14929 / IAM 14863 / T), this protein is UvrABC system protein B.